The sequence spans 655 residues: T-lymphocyte surface antigen Ly-9 (655 aa).

The first 47 residues, 1–47, serve as a signal peptide directing secretion; sequence MVAPKSHTDDWAPGPFSSKPQRSQLQIFSSVLQTSLLFLLMGLRASG. The 111-residue stretch at 48 to 158 folds into the Ig-like V-type 1 domain; that stretch reads KDSAPTVVSG…FVYEQLQEPQ (111 aa). Topologically, residues 48-454 are extracellular; that stretch reads KDSAPTVVSG…ICSGPERNTK (407 aa). Asn68, Asn95, Asn120, Asn169, and Asn173 each carry an N-linked (GlcNAc...) asparagine glycan. In terms of domain architecture, Ig-like C2-type 1 spans 159 to 235; sequence VTMKSVKVSE…NPVSQRSSLP (77 aa). Intrachain disulfides connect Cys172–Cys242 and Cys178–Cys222. Positions 251 to 363 constitute an Ig-like V-type 2 domain; that stretch reads GTTGETVVGV…LLIYRRLRKP (113 aa). N-linked (GlcNAc...) asparagine glycans are attached at residues Asn285, Asn413, and Asn424. One can recognise an Ig-like C2-type 2 domain in the interval 364–452; it reads KITWSLRHSE…ENICSGPERN (89 aa). 2 disulfides stabilise this stretch: Cys377–Cys446 and Cys383–Cys427. A helical transmembrane segment spans residues 455 to 476; the sequence is LWIGLFLMVCLLCVGIFSWCIW. Residues 477–655 are Cytoplasmic-facing; it reads KRKGRCSVPA…PESPTYENFT (179 aa). The interval 521–556 is disordered; the sequence is PLRPARQQPTPTSDSSSDSNLTTEEDEDRPEVHKPI. A compositionally biased stretch (low complexity) spans 530–542; the sequence is TPTSDSSSDSNLT. 2 short sequence motifs (ITSM) span residues 601–606 and 624–629; these read TMYAQV and TIYCSI. Phosphotyrosine is present on Tyr603. The tract at residues 633–655 is disordered; it reads QVVPPPQQNDLEIPESPTYENFT.

Interacts with SH2D1A, SH2D1B and INPP5D. Interacts (via phosphorylated cytoplasmic domain) with PTPN11; the interaction is blocked by SH2D1A. As to expression, increased surface expression on T-cells of systemic lupus erythematosus (SLE) patients.

It is found in the membrane. Its subcellular location is the cell membrane. Self-ligand receptor of the signaling lymphocytic activation molecule (SLAM) family. SLAM receptors triggered by homo- or heterotypic cell-cell interactions are modulating the activation and differentiation of a wide variety of immune cells and thus are involved in the regulation and interconnection of both innate and adaptive immune response. Activities are controlled by presence or absence of small cytoplasmic adapter proteins, SH2D1A/SAP and/or SH2D1B/EAT-2. May participate in adhesion reactions between T lymphocytes and accessory cells by homophilic interaction. Promotes T-cell differentiation into a helper T-cell Th17 phenotype leading to increased IL-17 secretion; the costimulatory activity requires SH2D1A. Promotes recruitment of RORC to the IL-17 promoter. May be involved in the maintenance of peripheral cell tolerance by serving as a negative regulator of the immune response. May disable autoantibody responses and inhibit IFN-gamma secretion by CD4(+) T-cells. May negatively regulate the size of thymic innate CD8(+) T-cells and the development of invariant natural killer T (iNKT) cells. This Homo sapiens (Human) protein is T-lymphocyte surface antigen Ly-9 (LY9).